The chain runs to 343 residues: 3-oxopimeloyl-[acyl-carrier-protein] synthase (343 aa).

Residues Cys132 and His272 contribute to the active site. The segment at 273 to 277 (QANHR) is ACP-binding. Asn302 is a catalytic residue.

This sequence belongs to the thiolase-like superfamily. BioZ family.

It catalyses the reaction malonyl-[ACP] + an acyl-CoA + H(+) = a 3-oxoacyl-[ACP] + CO2 + CoA. It carries out the reaction glutaryl-CoA + malonyl-[ACP] + H(+) = 3-oxo-6-carboxyhexanoyl-[ACP] + CO2 + CoA. It functions in the pathway cofactor biosynthesis; biotin biosynthesis. In terms of biological role, involved in the formation of the biotin precursor pimeloyl-ACP. Catalyzes the condensation of glutaryl-CoA, an intermediate in lysine degradation, with malonyl-ACP to produce 3-oxopimeloyl-ACP. The protein is 3-oxopimeloyl-[acyl-carrier-protein] synthase of Rhodothermus marinus (strain ATCC 43812 / DSM 4252 / R-10) (Rhodothermus obamensis).